The primary structure comprises 141 residues: Large ribosomal subunit protein uL11A (141 aa).

Belongs to the universal ribosomal protein uL11 family. In terms of assembly, part of the ribosomal stalk of the 50S ribosomal subunit. Interacts with L10 and the large rRNA to form the base of the stalk. L10 forms an elongated spine to which L12 dimers bind in a sequential fashion forming a multimeric L10(L12)X complex. Post-translationally, one or more lysine residues are methylated.

Functionally, forms part of the ribosomal stalk which helps the ribosome interact with GTP-bound translation factors. The polypeptide is Large ribosomal subunit protein uL11A (Halalkalibacterium halodurans (strain ATCC BAA-125 / DSM 18197 / FERM 7344 / JCM 9153 / C-125) (Bacillus halodurans)).